A 116-amino-acid chain; its full sequence is UPF0102 protein ELI_05985 (116 aa).

It belongs to the UPF0102 family.

This is UPF0102 protein ELI_05985 from Erythrobacter litoralis (strain HTCC2594).